Reading from the N-terminus, the 402-residue chain is Bone morphogenetic protein 8A (402 aa).

The first 19 residues, 1–19, serve as a signal peptide directing secretion; the sequence is MAARPGPLWLLGLTLCALG. A propeptide spanning residues 20–263 is cleaved from the precursor; the sequence is GGGPGLRPPP…ASPSPIRTPR (244 aa). N-linked (GlcNAc...) asparagine glycosylation is found at N158 and N343. 3 cysteine pairs are disulfide-bonded: C301/C367, C330/C399, and C334/C401.

This sequence belongs to the TGF-beta family. As to quaternary structure, homodimer; disulfide-linked.

Its subcellular location is the secreted. Its function is as follows. Induces cartilage and bone formation. May be the osteoinductive factor responsible for the phenomenon of epithelial osteogenesis. Plays a role in calcium regulation and bone homeostasis. Signaling protein involved in regulation of thermogenesis and energy balance. Proposed to increase the peripheral response of brown adipose tissue (BAT) to adrenergic stimulation while acting centrally in the hypothalamus to increase sympathetic output to BAT. Functionally, growth factor of the TGF-beta superfamily that plays important role in various biological processes, including spermatogenesis, osteogenesis, steroidogenesis as well as regulation of energy balance. Initiates the canonical BMP signaling cascade by associating with type I receptor BMPR1A and type II receptor BMPR2. Once all three components are bound together in a complex at the cell surface, BMPR2 phosphorylates and activates BMPR1A. In turn, BMPR1A propagates signal by phosphorylating SMAD1/5/8 that travel to the nucleus and act as activators and repressors of transcription of target genes. In addition, activates the SMAD2/3 pathway. The polypeptide is Bone morphogenetic protein 8A (BMP8A) (Homo sapiens (Human)).